We begin with the raw amino-acid sequence, 660 residues long: Putative ABC transporter ATP-binding MG390 (660 aa).

The Peptidase C39 domain occupies 6–126; the sequence is QEQQNECGIC…KLWTGYAATV (121 aa). Cys12 is a catalytic residue. A run of 6 helical transmembrane segments spans residues 150–170, 188–208, 265–285, 290–310, 379–399, and 402–422; these read LVTF…LLAT, LVVL…LQVI, YIPN…LIGI, FLLI…YDFF, SFFQ…GIIE, and YQLS…TYAT. The 194-residue stretch at 464 to 657 folds into the ABC transporter domain; it reads ISLENLSVTL…QNKINLTNYL (194 aa). 494 to 501 lines the ATP pocket; that stretch reads GQNGSGKS.

Belongs to the ABC transporter superfamily.

The protein resides in the cell membrane. The polypeptide is Putative ABC transporter ATP-binding MG390 (Mycoplasma genitalium (strain ATCC 33530 / DSM 19775 / NCTC 10195 / G37) (Mycoplasmoides genitalium)).